A 690-amino-acid chain; its full sequence is Protein arginine N-methyltransferase 7 (690 aa).

2 SAM-dependent MTase PRMT-type domains span residues 14-357 (QNSW…YSLW) and 366-690 (TKSV…QKKL).

The protein belongs to the class I-like SAM-binding methyltransferase superfamily. Protein arginine N-methyltransferase family. PRMT7 subfamily.

In terms of biological role, essential arginine methyltransferase that can both catalyze the formation of omega-N monomethylarginine (MMA) and symmetrical dimethylarginine (sDMA). Specifically mediates the symmetrical dimethylation of arginine residues in the small nuclear ribonucleoproteins SmD1 and SmD3. This Drosophila erecta (Fruit fly) protein is Protein arginine N-methyltransferase 7 (Art7).